Consider the following 398-residue polypeptide: 1-deoxy-D-xylulose 5-phosphate reductoisomerase (398 aa).

Residues Thr10, Gly11, Ser12, Ile13, Lys37, Asn38, and Asn124 each coordinate NADPH. Lys125 lines the 1-deoxy-D-xylulose 5-phosphate pocket. Glu126 is a binding site for NADPH. Asp150 serves as a coordination point for Mn(2+). 1-deoxy-D-xylulose 5-phosphate-binding residues include Ser151, Glu152, Ser186, and His209. Residue Glu152 coordinates Mn(2+). NADPH is bound at residue Gly215. The 1-deoxy-D-xylulose 5-phosphate site is built by Ser222, Asn227, Lys228, and Glu231. A Mn(2+)-binding site is contributed by Glu231.

It belongs to the DXR family. As to quaternary structure, homodimer. Mg(2+) serves as cofactor. The cofactor is Mn(2+).

It catalyses the reaction 2-C-methyl-D-erythritol 4-phosphate + NADP(+) = 1-deoxy-D-xylulose 5-phosphate + NADPH + H(+). The protein operates within isoprenoid biosynthesis; isopentenyl diphosphate biosynthesis via DXP pathway; isopentenyl diphosphate from 1-deoxy-D-xylulose 5-phosphate: step 1/6. Catalyzes the NADPH-dependent rearrangement and reduction of 1-deoxy-D-xylulose-5-phosphate (DXP) to 2-C-methyl-D-erythritol 4-phosphate (MEP). The protein is 1-deoxy-D-xylulose 5-phosphate reductoisomerase of Buchnera aphidicola subsp. Acyrthosiphon pisum (strain APS) (Acyrthosiphon pisum symbiotic bacterium).